A 202-amino-acid polypeptide reads, in one-letter code: Thymidylate kinase (202 aa).

13 to 20 serves as a coordination point for ATP; that stretch reads GTDGAGKS.

This sequence belongs to the thymidylate kinase family.

It catalyses the reaction dTMP + ATP = dTDP + ADP. Phosphorylation of dTMP to form dTDP in both de novo and salvage pathways of dTTP synthesis. This is Thymidylate kinase from Desulfotalea psychrophila (strain LSv54 / DSM 12343).